A 696-amino-acid polypeptide reads, in one-letter code: Glycine--tRNA ligase beta subunit (696 aa).

The protein belongs to the class-II aminoacyl-tRNA synthetase family. In terms of assembly, tetramer of two alpha and two beta subunits.

The protein resides in the cytoplasm. It catalyses the reaction tRNA(Gly) + glycine + ATP = glycyl-tRNA(Gly) + AMP + diphosphate. In Nitratidesulfovibrio vulgaris (strain DP4) (Desulfovibrio vulgaris), this protein is Glycine--tRNA ligase beta subunit.